Here is a 259-residue protein sequence, read N- to C-terminus: Ribonuclease HII (259 aa).

Residues 70–258 (TLIAGIDEVG…VKSLVLGKKE (189 aa)) form the RNase H type-2 domain. Positions 76, 77, and 168 each coordinate a divalent metal cation.

This sequence belongs to the RNase HII family. Requires Mn(2+) as cofactor. Mg(2+) is required as a cofactor.

It localises to the cytoplasm. The enzyme catalyses Endonucleolytic cleavage to 5'-phosphomonoester.. In terms of biological role, endonuclease that specifically degrades the RNA of RNA-DNA hybrids. In Streptococcus pneumoniae (strain 70585), this protein is Ribonuclease HII.